A 78-amino-acid polypeptide reads, in one-letter code: DNA-directed RNA polymerase subunit omega (78 aa).

The protein belongs to the RNA polymerase subunit omega family. As to quaternary structure, in cyanobacteria the RNAP catalytic core is composed of 2 alpha, 1 beta, 1 beta', 1 gamma and 1 omega subunit. When a sigma factor is associated with the core the holoenzyme is formed, which can initiate transcription.

The enzyme catalyses RNA(n) + a ribonucleoside 5'-triphosphate = RNA(n+1) + diphosphate. Functionally, promotes RNA polymerase assembly. Latches the N- and C-terminal regions of the beta' subunit thereby facilitating its interaction with the beta and alpha subunits. This is DNA-directed RNA polymerase subunit omega from Prochlorococcus marinus (strain MIT 9312).